We begin with the raw amino-acid sequence, 392 residues long: Large ribosomal subunit protein uL3 (392 aa).

It belongs to the universal ribosomal protein uL3 family.

It is found in the cytoplasm. Its function is as follows. The L3 protein is a component of the large subunit of cytoplasmic ribosomes. The chain is Large ribosomal subunit protein uL3 (rpl3) from Aspergillus fumigatus (strain ATCC MYA-4609 / CBS 101355 / FGSC A1100 / Af293) (Neosartorya fumigata).